Here is a 930-residue protein sequence, read N- to C-terminus: Urea transporter 2 (930 aa).

The segment covering 1 to 11 (MSDHHPLKEMS) has biased composition (basic and acidic residues). Residues 1 to 90 (MSDHHPLKEM…KRRESEVSRR (90 aa)) form a disordered region. Low complexity-rich tracts occupy residues 12–25 (DSNS…PLSS) and 32–43 (SELSSPTWPSSS). Residues 56 to 89 (PEEKDLRSSDEDSHIVKIEKPNERNKRRESEVSR) are compositionally biased toward basic and acidic residues. 8 helical membrane-spanning segments follow: residues 145 to 165 (ISGL…TIAG), 185 to 205 (AIAS…MAVF), 213 to 233 (WWLL…SSAL), 242 to 262 (LPVF…ATGH), 280 to 300 (NITW…VGVG), 311 to 331 (GGVI…HAAI), 350 to 372 (IYLG…MFYA), and 401 to 421 (VVGV…FLLL). The tract at residues 452–479 (SEEEKSPNGGSGEQSHGSGQWKAEESSE) is disordered. Ser-487 carries the phosphoserine modification. Transmembrane regions (helical) follow at residues 610–630 (GILI…SGCL), 648–668 (AIAA…MAVF), 676–696 (WWLL…SSAL), and 705–725 (LPVF…ATGH). Asn-743 carries an N-linked (GlcNAc...) asparagine glycan. The next 4 helical transmembrane spans lie at 774 to 794 (GGIF…HAAI), 813 to 833 (IYFG…GGMF), 842 to 862 (LLAI…ANML), and 864 to 884 (VFGL…FLLL).

This sequence belongs to the urea transporter family. In terms of tissue distribution, highly expressed in kidney medulla (at protein level). Also detected in testes, heart, brain and liver (at protein level). In the kidney, present in thin descending limbs of the loop of Henle and in the middle and terminal inner medullary collecting ducts. Expressed in the kidney medulla. As to expression, expressed in the peritubular myoid cells forming the outermost layer of the seminiferous tubules within the testes and is not detected in kidney. Expression levels are coordinated with the stage of testes development and increase 15 days postpartum, commensurate with the start of seminiferous tubule fluid movement.

The protein resides in the apical cell membrane. It is found in the basolateral cell membrane. The catalysed reaction is urea(in) = urea(out). Inhibited by phloretin. Activated by forskolin, 3-isobutyl-1-methylxanthine (IBMX) and cAMP. With respect to regulation, inhibited by phloretin. Its activity is regulated as follows. Inhibited by phloretin. Activated by forskolin, 3-isobutyl-1-methylxanthine (IBMX) and cAMP. Functionally, mediates the transport of urea driven by a concentration gradient across the cell membrane of the renal inner medullary collecting duct which is critical to the urinary concentrating mechanism. Mediates the transport of urea driven by a concentration gradient across the cell membrane. Implicated in the urea movement across the blood-testis barrier and does not translocate water. The chain is Urea transporter 2 (Slc14a2) from Mus musculus (Mouse).